The following is an 88-amino-acid chain: MIKLRLKRCGRKQRAVYQIVAIDVRSPREGKALRKVGFYDPIKNQTDLNVRAILYFLEKGAQPTGTVQDILKKAEIDKELRPNQTKFN.

The protein belongs to the bacterial ribosomal protein bS16 family.

It is found in the plastid. It localises to the chloroplast. This chain is Small ribosomal subunit protein bS16c, found in Jasminum nudiflorum (Winter jasmine).